The following is a 180-amino-acid chain: Lysine-specific demethylase 5C (180 aa).

The tract at residues 116-159 (PEESLAYSSDAGEGAGHIPKVQGLLENGDSVTSPEKVATEEGSG) is disordered. Residue serine 148 is modified to Phosphoserine.

Belongs to the JARID1 histone demethylase family. Part of two distinct complexes, one containing E2F6, and the other containing REST. Interacts with ZMYND8. It depends on Fe(2+) as a cofactor.

The protein localises to the nucleus. The enzyme catalyses N(6),N(6),N(6)-trimethyl-L-lysyl(4)-[histone H3] + 3 2-oxoglutarate + 3 O2 = L-lysyl(4)-[histone H3] + 3 formaldehyde + 3 succinate + 3 CO2. Its function is as follows. Histone demethylase that specifically demethylates 'Lys-4' of histone H3, thereby playing a central role in histone code. Does not demethylate histone H3 'Lys-9', H3 'Lys-27', H3 'Lys-36', H3 'Lys-79' or H4 'Lys-20'. Demethylates trimethylated and dimethylated but not monomethylated H3 'Lys-4'. Participates in transcriptional repression of neuronal genes by recruiting histone deacetylases and REST at neuron-restrictive silencer elements. Represses the CLOCK-BMAL1 heterodimer-mediated transcriptional activation of the core clock component PER2. In Cricetulus griseus (Chinese hamster), this protein is Lysine-specific demethylase 5C (KDM5C).